The following is a 129-amino-acid chain: Small ribosomal subunit protein uS11 (129 aa).

The protein belongs to the universal ribosomal protein uS11 family. In terms of assembly, part of the 30S ribosomal subunit. Interacts with proteins S7 and S18. Binds to IF-3.

Functionally, located on the platform of the 30S subunit, it bridges several disparate RNA helices of the 16S rRNA. Forms part of the Shine-Dalgarno cleft in the 70S ribosome. The sequence is that of Small ribosomal subunit protein uS11 from Colwellia psychrerythraea (strain 34H / ATCC BAA-681) (Vibrio psychroerythus).